The following is a 223-amino-acid chain: Putative PAN domain-containing protein R486 (223 aa).

Positions 1 to 23 (MSQTAIIIWIVVIIILLVLGGLG) are cleaved as a signal peptide. A disordered region spans residues 39 to 73 (PTPINPPSSITPIQPINPPSSITPIQPSGPPSGGN). The span at 45–64 (PSSITPIQPINPPSSITPIQ) shows a compositional bias: low complexity. PAN domains are found at residues 80 to 155 (CPAY…EDGC) and 159 to 223 (ARYN…KMPH). Intrachain disulfides connect Cys80–Cys155 and Cys109–Cys131. N-linked (GlcNAc...) asparagine; by host glycans are attached at residues Asn162, Asn189, and Asn213. Cysteines 182 and 204 form a disulfide.

The protein localises to the secreted. Its subcellular location is the virion. This is Putative PAN domain-containing protein R486 from Acanthamoeba polyphaga mimivirus (APMV).